The sequence spans 727 residues: Elongation factor 2 (727 aa).

Positions 19–260 (DQIRNMGICA…MAIKHLPNPL (242 aa)) constitute a tr-type G domain. Residues 28–35 (AHIDHGKT), 94–98 (DTPGH), and 148–151 (NKVD) contribute to the GTP site. At His603 the chain carries Diphthamide.

Belongs to the TRAFAC class translation factor GTPase superfamily. Classic translation factor GTPase family. EF-G/EF-2 subfamily.

Its subcellular location is the cytoplasm. Catalyzes the GTP-dependent ribosomal translocation step during translation elongation. During this step, the ribosome changes from the pre-translocational (PRE) to the post-translocational (POST) state as the newly formed A-site-bound peptidyl-tRNA and P-site-bound deacylated tRNA move to the P and E sites, respectively. Catalyzes the coordinated movement of the two tRNA molecules, the mRNA and conformational changes in the ribosome. This is Elongation factor 2 from Methanococcus maripaludis (strain C7 / ATCC BAA-1331).